Here is a 360-residue protein sequence, read N- to C-terminus: Archaemetzincin-2 (360 aa).

Zn(2+) is bound at residue His254. Glu255 (proton acceptor) is an active-site residue. Residues His258, His264, Cys265, Cys270, Cys289, and Cys292 each contribute to the Zn(2+) site.

This sequence belongs to the peptidase M54 family. It depends on Zn(2+) as a cofactor.

Probable zinc metalloprotease. The protein is Archaemetzincin-2 (AMZ2) of Macaca fascicularis (Crab-eating macaque).